A 175-amino-acid chain; its full sequence is Lithostathine (175 aa).

The signal sequence occupies residues 1–26; sequence MLPSLGLPRLSWMLLSCLMLLSQIQG. A propeptide spanning residues 27–37 is cleaved from the precursor; it reads ENSQKELPSAR. The C-type lectin domain maps to 38 to 173; sequence ISCPSGSMAY…NLNLPYVCKF (136 aa). Disulfide bonds link C40/C51, C68/C171, and C146/C163.

As to quaternary structure, cleaved to give an A chain and a B chain joined by a disulfide bond. As to expression, in pancreatic acinar cells.

It is found in the secreted. Might act as an inhibitor of spontaneous calcium carbonate precipitation. This Bos taurus (Bovine) protein is Lithostathine (PTP).